We begin with the raw amino-acid sequence, 728 residues long: Polyribonucleotide nucleotidyltransferase (728 aa).

Positions 509 and 515 each coordinate Mg(2+). The KH domain occupies 576 to 638 (TKIYTFYIPK…TKLKIAILKI (63 aa)). In terms of domain architecture, S1 motif spans 648–715 (GTIYKAKVKN…KFRKIKLSHK (68 aa)).

This sequence belongs to the polyribonucleotide nucleotidyltransferase family. Requires Mg(2+) as cofactor.

The protein localises to the cytoplasm. It catalyses the reaction RNA(n+1) + phosphate = RNA(n) + a ribonucleoside 5'-diphosphate. Functionally, involved in mRNA degradation. Catalyzes the phosphorolysis of single-stranded polyribonucleotides processively in the 3'- to 5'-direction. The sequence is that of Polyribonucleotide nucleotidyltransferase from Karelsulcia muelleri (strain GWSS) (Sulcia muelleri).